We begin with the raw amino-acid sequence, 175 residues long: MANITVFYNEDFGGKQVDLKPDEYKRDKLEALGIENNTISSVKVPPGVKAILYKNDDFTGDQIEVVANAEELGPLNNNVSSIKVMSVPVQPRARFFYKEQFDGKEVDLPPGQYTQAELERYGIDNNTISSVKPEGLKVVLFKNDNFSAGDTLSVTSNAPSLGAMNNNTSSIRITP.

Beta/gamma crystallin 'Greek key' domains lie at 2–46 and 48–86; these read ANIT…KVPP and VKAI…KVMS. The connecting peptide stretch occupies residues 87–90; that stretch reads VPVQ. Beta/gamma crystallin 'Greek key' domains are found at residues 91 to 135 and 136 to 175; these read PRAR…KPEG and LKVV…RITP.

The protein belongs to the beta/gamma-crystallin family.

Its subcellular location is the spore. The protein localises to the perispore. The polypeptide is Development-specific protein S homolog (ops) (Myxococcus xanthus).